A 353-amino-acid chain; its full sequence is Methylthioribose-1-phosphate isomerase (353 aa).

Substrate contacts are provided by residues 51–53, Arg94, and Gln203; that span reads RGA. The Proton donor role is filled by Asp244. Residue 254–255 participates in substrate binding; sequence NK.

This sequence belongs to the eIF-2B alpha/beta/delta subunits family. MtnA subfamily.

The enzyme catalyses 5-(methylsulfanyl)-alpha-D-ribose 1-phosphate = 5-(methylsulfanyl)-D-ribulose 1-phosphate. The protein operates within amino-acid biosynthesis; L-methionine biosynthesis via salvage pathway; L-methionine from S-methyl-5-thio-alpha-D-ribose 1-phosphate: step 1/6. Its function is as follows. Catalyzes the interconversion of methylthioribose-1-phosphate (MTR-1-P) into methylthioribulose-1-phosphate (MTRu-1-P). The protein is Methylthioribose-1-phosphate isomerase of Nostoc punctiforme (strain ATCC 29133 / PCC 73102).